The following is a 269-amino-acid chain: Undecaprenyl-diphosphatase (269 aa).

The next 7 membrane-spanning stretches (helical) occupy residues 41–61 (FATMFEIVIQLGAILAVVFHY), 78–98 (GFNLWFKIFIAFIPAAVIGLL), 107–127 (LFSPFTVAIALIAGAIMMIVI), 148–167 (SLLIGIAQVMSLFPGMSRSA), 184–204 (AEFSFFLAIPTMFAATTLSLL), 213–233 (LEWQALAVGFITSFLTALFVV), and 248–268 (FAYYRLAVGVLMILLVAEKIV).

It belongs to the UppP family.

The protein resides in the cell membrane. The enzyme catalyses di-trans,octa-cis-undecaprenyl diphosphate + H2O = di-trans,octa-cis-undecaprenyl phosphate + phosphate + H(+). Catalyzes the dephosphorylation of undecaprenyl diphosphate (UPP). Confers resistance to bacitracin. The sequence is that of Undecaprenyl-diphosphatase from Thermoanaerobacter pseudethanolicus (strain ATCC 33223 / 39E) (Clostridium thermohydrosulfuricum).